The chain runs to 203 residues: FMN-dependent NADH:quinone oxidoreductase (203 aa).

Residues S9 and 15 to 17 (SKS) contribute to the FMN site.

This sequence belongs to the azoreductase type 1 family. Homodimer. Requires FMN as cofactor.

It catalyses the reaction 2 a quinone + NADH + H(+) = 2 a 1,4-benzosemiquinone + NAD(+). It carries out the reaction N,N-dimethyl-1,4-phenylenediamine + anthranilate + 2 NAD(+) = 2-(4-dimethylaminophenyl)diazenylbenzoate + 2 NADH + 2 H(+). Functionally, quinone reductase that provides resistance to thiol-specific stress caused by electrophilic quinones. Also exhibits azoreductase activity. Catalyzes the reductive cleavage of the azo bond in aromatic azo compounds to the corresponding amines. The chain is FMN-dependent NADH:quinone oxidoreductase from Bordetella avium (strain 197N).